The sequence spans 279 residues: Shikimate dehydrogenase (NADP(+)) (279 aa).

Shikimate-binding positions include 21–23 (SRS) and threonine 68. Lysine 72 acts as the Proton acceptor in catalysis. Aspartate 83 is a binding site for NADP(+). 2 residues coordinate shikimate: asparagine 92 and aspartate 107. NADP(+) is bound by residues 132–136 (GAGGA), 156–161 (NRTVER), and leucine 221. Residue tyrosine 223 participates in shikimate binding. Residue glycine 244 coordinates NADP(+).

The protein belongs to the shikimate dehydrogenase family. Homodimer.

It catalyses the reaction shikimate + NADP(+) = 3-dehydroshikimate + NADPH + H(+). It participates in metabolic intermediate biosynthesis; chorismate biosynthesis; chorismate from D-erythrose 4-phosphate and phosphoenolpyruvate: step 4/7. Its function is as follows. Involved in the biosynthesis of the chorismate, which leads to the biosynthesis of aromatic amino acids. Catalyzes the reversible NADPH linked reduction of 3-dehydroshikimate (DHSA) to yield shikimate (SA). This Nitrobacter winogradskyi (strain ATCC 25391 / DSM 10237 / CIP 104748 / NCIMB 11846 / Nb-255) protein is Shikimate dehydrogenase (NADP(+)).